Consider the following 555-residue polypeptide: CTP synthase (555 aa).

The amidoligase domain stretch occupies residues 1 to 265; sequence MTRYIFITGG…GNRVCEKLNI (265 aa). Ser-13 provides a ligand contact to CTP. UTP is bound at residue Ser-13. ATP contacts are provided by residues 14–19 and Asp-71; that span reads SLGKGI. Mg(2+)-binding residues include Asp-71 and Glu-139. CTP contacts are provided by residues 146-148, 186-191, and Lys-222; these read DIE and KTKPTQ. UTP contacts are provided by residues 186 to 191 and Lys-222; that span reads KTKPTQ. The Glutamine amidotransferase type-1 domain maps to 290–541; it reads TVAVVGKYVD…IKAGLAAKEA (252 aa). Gly-351 is a binding site for L-glutamine. The Nucleophile; for glutamine hydrolysis role is filled by Cys-378. L-glutamine is bound by residues 379–382, Glu-402, and Arg-469; that span reads LGMQ. Active-site residues include His-514 and Glu-516.

It belongs to the CTP synthase family. Homotetramer.

The enzyme catalyses UTP + L-glutamine + ATP + H2O = CTP + L-glutamate + ADP + phosphate + 2 H(+). The catalysed reaction is L-glutamine + H2O = L-glutamate + NH4(+). It catalyses the reaction UTP + NH4(+) + ATP = CTP + ADP + phosphate + 2 H(+). Its pathway is pyrimidine metabolism; CTP biosynthesis via de novo pathway; CTP from UDP: step 2/2. With respect to regulation, allosterically activated by GTP, when glutamine is the substrate; GTP has no effect on the reaction when ammonia is the substrate. The allosteric effector GTP functions by stabilizing the protein conformation that binds the tetrahedral intermediate(s) formed during glutamine hydrolysis. Inhibited by the product CTP, via allosteric rather than competitive inhibition. In terms of biological role, catalyzes the ATP-dependent amination of UTP to CTP with either L-glutamine or ammonia as the source of nitrogen. Regulates intracellular CTP levels through interactions with the four ribonucleotide triphosphates. The polypeptide is CTP synthase (Coxiella burnetii (strain CbuK_Q154) (Coxiella burnetii (strain Q154))).